Here is a 280-residue protein sequence, read N- to C-terminus: 3-methyl-2-oxobutanoate hydroxymethyltransferase (280 aa).

Asp-60 and Asp-99 together coordinate Mg(2+). 3-methyl-2-oxobutanoate contacts are provided by residues 60 to 61 (DS), Asp-99, and Lys-129. Residue Glu-131 coordinates Mg(2+). The active-site Proton acceptor is the Glu-198.

The protein belongs to the PanB family. In terms of assembly, homodecamer; pentamer of dimers. Mg(2+) serves as cofactor.

It is found in the cytoplasm. The enzyme catalyses 3-methyl-2-oxobutanoate + (6R)-5,10-methylene-5,6,7,8-tetrahydrofolate + H2O = 2-dehydropantoate + (6S)-5,6,7,8-tetrahydrofolate. The protein operates within cofactor biosynthesis; (R)-pantothenate biosynthesis; (R)-pantoate from 3-methyl-2-oxobutanoate: step 1/2. In terms of biological role, catalyzes the reversible reaction in which hydroxymethyl group from 5,10-methylenetetrahydrofolate is transferred onto alpha-ketoisovalerate to form ketopantoate. The sequence is that of 3-methyl-2-oxobutanoate hydroxymethyltransferase from Thermobifida fusca (strain YX).